A 341-amino-acid polypeptide reads, in one-letter code: Outer membrane protein U (341 aa).

An N-terminal signal peptide occupies residues M1–A21.

This sequence belongs to the Gram-negative porin family. Homotrimer.

The protein localises to the cell outer membrane. Forms pores that allow passive diffusion of small molecules across the outer membrane. In Vibrio cholerae serotype O1 (strain ATCC 39315 / El Tor Inaba N16961), this protein is Outer membrane protein U (ompU).